We begin with the raw amino-acid sequence, 262 residues long: tRNA (guanine-N(1)-)-methyltransferase (262 aa).

Residues glycine 113 and 137-142 (IGDYVL) each bind S-adenosyl-L-methionine.

This sequence belongs to the RNA methyltransferase TrmD family. As to quaternary structure, homodimer.

Its subcellular location is the cytoplasm. It catalyses the reaction guanosine(37) in tRNA + S-adenosyl-L-methionine = N(1)-methylguanosine(37) in tRNA + S-adenosyl-L-homocysteine + H(+). Its function is as follows. Specifically methylates guanosine-37 in various tRNAs. In Thermobifida fusca (strain YX), this protein is tRNA (guanine-N(1)-)-methyltransferase.